The following is a 165-amino-acid chain: Large ribosomal subunit protein uL10 (165 aa).

This sequence belongs to the universal ribosomal protein uL10 family. As to quaternary structure, part of the ribosomal stalk of the 50S ribosomal subunit. The N-terminus interacts with L11 and the large rRNA to form the base of the stalk. The C-terminus forms an elongated spine to which L12 dimers bind in a sequential fashion forming a multimeric L10(L12)X complex.

Its function is as follows. Forms part of the ribosomal stalk, playing a central role in the interaction of the ribosome with GTP-bound translation factors. This Borrelia turicatae (strain 91E135) protein is Large ribosomal subunit protein uL10.